A 267-amino-acid polypeptide reads, in one-letter code: Pyridoxine/pyridoxamine 5'-phosphate oxidase (267 aa).

Substrate contacts are provided by residues 20–23 (RQGY) and Lys-80. FMN-binding positions include 75–80 (RTVLLK), 90–91 (YT), Arg-96, Lys-97, and Gln-119. Substrate contacts are provided by Tyr-137, Arg-141, and Ser-145. FMN contacts are provided by residues 154–155 (QS) and Trp-200. 206-208 (RLH) is a binding site for substrate. Arg-210 serves as a coordination point for FMN.

It belongs to the pyridoxamine 5'-phosphate oxidase family. As to quaternary structure, homodimer. FMN is required as a cofactor.

The enzyme catalyses pyridoxamine 5'-phosphate + O2 + H2O = pyridoxal 5'-phosphate + H2O2 + NH4(+). It catalyses the reaction pyridoxine 5'-phosphate + O2 = pyridoxal 5'-phosphate + H2O2. Its pathway is cofactor metabolism; pyridoxal 5'-phosphate salvage; pyridoxal 5'-phosphate from pyridoxamine 5'-phosphate: step 1/1. It participates in cofactor metabolism; pyridoxal 5'-phosphate salvage; pyridoxal 5'-phosphate from pyridoxine 5'-phosphate: step 1/1. Its function is as follows. Catalyzes the oxidation of either pyridoxine 5'-phosphate (PNP) or pyridoxamine 5'-phosphate (PMP) into pyridoxal 5'-phosphate (PLP). The sequence is that of Pyridoxine/pyridoxamine 5'-phosphate oxidase from Frankia casuarinae (strain DSM 45818 / CECT 9043 / HFP020203 / CcI3).